Reading from the N-terminus, the 350-residue chain is Biotin synthase (350 aa).

The 219-residue stretch at 63-281 (GDIELATLLS…IAVARITMPK (219 aa)) folds into the Radical SAM core domain. [4Fe-4S] cluster contacts are provided by Cys78, Cys82, and Cys85. Residues Cys122, Cys153, Cys213, and Arg285 each coordinate [2Fe-2S] cluster.

It belongs to the radical SAM superfamily. Biotin synthase family. As to quaternary structure, homodimer. [4Fe-4S] cluster serves as cofactor. The cofactor is [2Fe-2S] cluster.

It catalyses the reaction (4R,5S)-dethiobiotin + (sulfur carrier)-SH + 2 reduced [2Fe-2S]-[ferredoxin] + 2 S-adenosyl-L-methionine = (sulfur carrier)-H + biotin + 2 5'-deoxyadenosine + 2 L-methionine + 2 oxidized [2Fe-2S]-[ferredoxin]. Its pathway is cofactor biosynthesis; biotin biosynthesis; biotin from 7,8-diaminononanoate: step 2/2. Functionally, catalyzes the conversion of dethiobiotin (DTB) to biotin by the insertion of a sulfur atom into dethiobiotin via a radical-based mechanism. The sequence is that of Biotin synthase from Acidovorax ebreus (strain TPSY) (Diaphorobacter sp. (strain TPSY)).